We begin with the raw amino-acid sequence, 119 residues long: Autophagy-related protein 8 (119 aa).

The Phosphatidylethanolamine amidated glycine moiety is linked to residue G116. The propeptide at 117-119 is removed in mature form; sequence EAL.

This sequence belongs to the ATG8 family. Conjugation to phosphatidylethanolamine (PE) leads to homodimerization. Interacts with ATG1, ATG3, ATG4, ATG7 and ATG12. Post-translationally, the C-terminal Glu-117, Ala-118 and Leu-119 residues of ATG8 are removed by ATG4 to expose Gly-116 at the C-terminus. This Gly-116 forms then a thioester bond with ATG7 (E1-like activating enzyme) before being transferred to ATG3 (the specific E2 conjugating enzyme), in order to be finally amidated with phosphatidylethanolamine. This lipid modification anchors ATG8 to membranes and can be reversed by ATG4, releasing soluble ATG8.

Its subcellular location is the cytoplasmic vesicle. The protein localises to the cvt vesicle membrane. It is found in the autophagosome membrane. The protein resides in the vacuole membrane. Functionally, ubiquitin-like modifier involved in cytoplasm to vacuole transport (Cvt) vesicles and autophagosome formation. With ATG4, mediates the delivery of the vesicles and autophagosomes to the vacuole via the microtubule cytoskeleton. Required for selective autophagic degradation of the nucleus (nucleophagy) as well as for mitophagy which contributes to regulate mitochondrial quantity and quality by eliminating the mitochondria to a basal level to fulfill cellular energy requirements and preventing excess ROS production. Also participates in membrane fusion events that take place in the early secretory pathway. Also involved in endoplasmic reticulum-specific autophagic process and is essential for the survival of cells subjected to severe ER stress. The ATG8-PE conjugate mediates tethering between adjacent membranes and stimulates membrane hemifusion, leading to expansion of the autophagosomal membrane during autophagy. Moreover not only conjugation, but also subsequent ATG8-PE deconjugation is an important step required to facilitate multiple events during macroautophagy, and especially for efficient autophagosome biogenesis, the assembly of ATG9-containing tubulovesicular clusters into phagophores/autophagosomes, and for the disassembly of PAS-associated ATG components. Autophagy is required for conidiation, aerial mycelial growth, and pseudothecia formation, but not for host invasion. This is Autophagy-related protein 8 from Cochliobolus heterostrophus (strain C4 / ATCC 48331 / race T) (Southern corn leaf blight fungus).